The chain runs to 300 residues: tRNA pseudouridine synthase B (300 aa).

D44 serves as the catalytic Nucleophile.

Belongs to the pseudouridine synthase TruB family. Type 1 subfamily.

It catalyses the reaction uridine(55) in tRNA = pseudouridine(55) in tRNA. Its function is as follows. Responsible for synthesis of pseudouridine from uracil-55 in the psi GC loop of transfer RNAs. The chain is tRNA pseudouridine synthase B from Corynebacterium diphtheriae (strain ATCC 700971 / NCTC 13129 / Biotype gravis).